The sequence spans 930 residues: Translation initiation factor IF-2 (930 aa).

Residues 29-316 (GEFVKSASST…GRKSKRAKRA (288 aa)) form a disordered region. A compositionally biased stretch (pro residues) spans 81–120 (RPGPKPGPPVAQQPAAPAAPPAAPPAPPTPAAAPPSPAPA). Over residues 121–135 (APAAATPAEPAAPSA) the composition is skewed to low complexity. Composition is skewed to pro residues over residues 136–155 (RPGP…PGAP) and 180–191 (PRPQGPGGPRPG). Gly residues predominate over residues 192–204 (PGAGGPRPGGGPR). Positions 228 to 240 (GGGPRPGGGPRPT) are enriched in pro residues. Over residues 241 to 301 (PGGAGRPGGG…GAAGAFGRPG (61 aa)) the composition is skewed to gly residues. Over residues 305-314 (KRGRKSKRAK) the composition is skewed to basic residues. The tr-type G domain occupies 426–598 (IRPPVVTVMG…VILTADASLD (173 aa)). A G1 region spans residues 435 to 442 (GHVDHGKT). 435 to 442 (GHVDHGKT) is a binding site for GTP. The G2 stretch occupies residues 460–464 (GITQH). Residues 485-488 (DTPG) form a G3 region. GTP contacts are provided by residues 485 to 489 (DTPGH) and 539 to 542 (NKID). Residues 539–542 (NKID) are G4. The tract at residues 575 to 577 (SAK) is G5.

This sequence belongs to the TRAFAC class translation factor GTPase superfamily. Classic translation factor GTPase family. IF-2 subfamily.

The protein resides in the cytoplasm. In terms of biological role, one of the essential components for the initiation of protein synthesis. Protects formylmethionyl-tRNA from spontaneous hydrolysis and promotes its binding to the 30S ribosomal subunits. Also involved in the hydrolysis of GTP during the formation of the 70S ribosomal complex. The sequence is that of Translation initiation factor IF-2 from Mycolicibacterium vanbaalenii (strain DSM 7251 / JCM 13017 / BCRC 16820 / KCTC 9966 / NRRL B-24157 / PYR-1) (Mycobacterium vanbaalenii).